A 91-amino-acid chain; its full sequence is MKKLFASLALAAAVAPVWAATQTVTLAVPGMTCAACPITVKKALSKVEGVSKVDVGFEKREAVVTFDDTKASVQKLTKATADAGYPSSVKQ.

The signal sequence occupies residues Met-1 to Ala-19. Residues Gln-22–Ser-88 form the HMA domain. Residues Cys-33 and Cys-36 each contribute to the Hg(2+) site.

The protein belongs to the MerP family. As to quaternary structure, monomer.

The protein resides in the periplasm. Functionally, involved in mercury resistance. Acts as a mercury scavenger that specifically binds to a mercuric ion in the periplasm and probably passes it to the cytoplasmic mercuric reductase MerA via the mercuric transport protein MerT. This Shigella flexneri protein is Mercuric transport protein periplasmic component.